Reading from the N-terminus, the 303-residue chain is UDP-3-O-acyl-N-acetylglucosamine deacetylase (303 aa).

Zn(2+) contacts are provided by histidine 78, histidine 237, and aspartate 241. The Proton donor role is filled by histidine 264.

This sequence belongs to the LpxC family. The cofactor is Zn(2+).

The catalysed reaction is a UDP-3-O-[(3R)-3-hydroxyacyl]-N-acetyl-alpha-D-glucosamine + H2O = a UDP-3-O-[(3R)-3-hydroxyacyl]-alpha-D-glucosamine + acetate. It participates in glycolipid biosynthesis; lipid IV(A) biosynthesis; lipid IV(A) from (3R)-3-hydroxytetradecanoyl-[acyl-carrier-protein] and UDP-N-acetyl-alpha-D-glucosamine: step 2/6. Catalyzes the hydrolysis of UDP-3-O-myristoyl-N-acetylglucosamine to form UDP-3-O-myristoylglucosamine and acetate, the committed step in lipid A biosynthesis. This is UDP-3-O-acyl-N-acetylglucosamine deacetylase from Cellvibrio japonicus (strain Ueda107) (Pseudomonas fluorescens subsp. cellulosa).